Reading from the N-terminus, the 218-residue chain is Probable GTP-binding protein EngB (218 aa).

In terms of domain architecture, EngB-type G spans 31–205; sequence VGVEIAFAGR…LGILNEWCHP (175 aa). Residues 39–46, 66–70, 84–87, 151–154, and 184–186 contribute to the GTP site; these read GRSNAGKS, GRTQL, DLPG, TKCD, and FSS. Positions 46 and 68 each coordinate Mg(2+).

This sequence belongs to the TRAFAC class TrmE-Era-EngA-EngB-Septin-like GTPase superfamily. EngB GTPase family. Mg(2+) serves as cofactor.

Its function is as follows. Necessary for normal cell division and for the maintenance of normal septation. This is Probable GTP-binding protein EngB from Shewanella loihica (strain ATCC BAA-1088 / PV-4).